Consider the following 294-residue polypeptide: Shikimate dehydrogenase (NADP(+)) (294 aa).

Residues 22-24 (SLS) and Ser69 contribute to the shikimate site. Lys73 functions as the Proton acceptor in the catalytic mechanism. 2 residues coordinate shikimate: Asn94 and Asp111. NADP(+) is bound by residues 135-139 (GAGGA) and Leu236. Tyr238 contributes to the shikimate binding site. An NADP(+)-binding site is contributed by Gly260.

Belongs to the shikimate dehydrogenase family. In terms of assembly, homodimer.

The enzyme catalyses shikimate + NADP(+) = 3-dehydroshikimate + NADPH + H(+). It functions in the pathway metabolic intermediate biosynthesis; chorismate biosynthesis; chorismate from D-erythrose 4-phosphate and phosphoenolpyruvate: step 4/7. In terms of biological role, involved in the biosynthesis of the chorismate, which leads to the biosynthesis of aromatic amino acids. Catalyzes the reversible NADPH linked reduction of 3-dehydroshikimate (DHSA) to yield shikimate (SA). This is Shikimate dehydrogenase (NADP(+)) from Streptococcus equi subsp. zooepidemicus (strain MGCS10565).